The sequence spans 259 residues: Ubiquitin-conjugating enzyme E2 J2 (259 aa).

At 1 to 226 (MSSNSVKRAP…AGLQQANRHH (226 aa)) the chain is on the cytoplasmic side. Residues 12-162 (TATQRLKQDY…DKVFCELFPE (151 aa)) enclose the UBC core domain. Residue Cys94 is the Glycyl thioester intermediate of the active site. Positions 174–200 (QDELSSRPQALPLPDVVPDGETHHGQH) are disordered. Residues 227 to 247 (GLLGGALANLFVIVGFAAFAY) form a helical; Anchor for type IV membrane protein membrane-spanning segment. Residues 248–259 (TVKYVLRSIAQE) are Lumenal-facing.

It belongs to the ubiquitin-conjugating enzyme family.

The protein localises to the endoplasmic reticulum membrane. It catalyses the reaction S-ubiquitinyl-[E1 ubiquitin-activating enzyme]-L-cysteine + [E2 ubiquitin-conjugating enzyme]-L-cysteine = [E1 ubiquitin-activating enzyme]-L-cysteine + S-ubiquitinyl-[E2 ubiquitin-conjugating enzyme]-L-cysteine.. It functions in the pathway protein modification; protein ubiquitination. In terms of biological role, catalyzes the covalent attachment of ubiquitin to other proteins. Seems to function in the selective degradation of misfolded membrane proteins from the endoplasmic reticulum (ERAD). In cooperation with the GATOR2 complex, catalyzes 'Lys-6'-linked ubiquitination of NPRL2. In Bos taurus (Bovine), this protein is Ubiquitin-conjugating enzyme E2 J2 (UBE2J2).